A 190-amino-acid chain; its full sequence is Ribosome hibernation promotion factor (190 aa).

This sequence belongs to the HPF/YfiA ribosome-associated protein family. Long HPF subfamily. Interacts with 100S ribosomes.

The protein localises to the cytoplasm. Its function is as follows. Required for dimerization of active 70S ribosomes into 100S ribosomes in stationary phase; 100S ribosomes are translationally inactive and sometimes present during exponential growth. The chain is Ribosome hibernation promotion factor from Staphylococcus aureus (strain COL).